Consider the following 265-residue polypeptide: 6-carboxyhexanoate--CoA ligase (265 aa).

Belongs to the BioW family. Homodimer. Mg(2+) serves as cofactor.

The catalysed reaction is heptanedioate + ATP + CoA = 6-carboxyhexanoyl-CoA + AMP + diphosphate. It participates in metabolic intermediate metabolism; pimeloyl-CoA biosynthesis; pimeloyl-CoA from pimelate: step 1/1. Catalyzes the transformation of pimelate into pimeloyl-CoA with concomitant hydrolysis of ATP to AMP. This is 6-carboxyhexanoate--CoA ligase from Syntrophotalea carbinolica (strain DSM 2380 / NBRC 103641 / GraBd1) (Pelobacter carbinolicus).